An 805-amino-acid chain; its full sequence is Leucine--tRNA ligase (805 aa).

The short motif at 40–51 (PYPSGSGLHVGH) is the 'HIGH' region element. Residues 576–580 (KMSKS) carry the 'KMSKS' region motif. Lys-579 is a binding site for ATP.

It belongs to the class-I aminoacyl-tRNA synthetase family.

Its subcellular location is the cytoplasm. The enzyme catalyses tRNA(Leu) + L-leucine + ATP = L-leucyl-tRNA(Leu) + AMP + diphosphate. The chain is Leucine--tRNA ligase from Chlorobium chlorochromatii (strain CaD3).